The following is a 450-amino-acid chain: MTFTAFTMFLVFSTFSQSMMVNRTGTITIMFTTMLFFLSMDIVAMSPGMTLFNNWFNLTPYNLPLSFLMLSLIVMLLMYSTSNHRYDLKSPFYLLLLLTNMMGLLLFPLVNDLIALYVVMELQSYSLYLLTGLHSRSYNSSRASLLYFLMGGVASTIMLLASYFVYALTGTTNLSDMAMFYSYSNAFDYFDILLVALLFKMGMAPLHRWSIAVYNYAPTYITAYISMVAKMSMVSWIFANANLFHHHVTILFFYISLAMAAYKPLFQVNIKTMLAYSGMLNFSYILLSMMSYDPAFYIYMIQYVLTHLILFLGMLGASQYVNSPISIWSPLTFMHQLKLPNLTLAFSLILALFSLIGMPPTPGFYAKLFVLSAALQDNYVLETCAIVVCSVVATYYYANMIKVLFNSSTQKVTNFINPSLAFTMASATSLLFSFFMFMPSLSEGLYLITL.

13 consecutive transmembrane segments (helical) span residues 25 to 45 (GTIT…IVAM), 58 to 78 (LTPY…MLLM), 90 to 110 (SPFY…FPLV), 113 to 133 (LIAL…LTGL), 145 to 165 (LLYF…SYFV), 186 to 206 (AFDY…MAPL), 219 to 239 (TYIT…WIFA), 248 to 268 (VTIL…LFQV), 272 to 292 (TMLA…MMSY), 295 to 315 (AFYI…LGML), 344 to 364 (LAFS…TPGF), 385 to 405 (AIVV…KVLF), and 414 to 436 (NFIN…SFFM).

It belongs to the complex I subunit 2 family.

The protein resides in the mitochondrion inner membrane. It catalyses the reaction a ubiquinone + NADH + 5 H(+)(in) = a ubiquinol + NAD(+) + 4 H(+)(out). Its function is as follows. Core subunit of the mitochondrial membrane respiratory chain NADH dehydrogenase (Complex I) that is believed to belong to the minimal assembly required for catalysis. Complex I functions in the transfer of electrons from NADH to the respiratory chain. The immediate electron acceptor for the enzyme is believed to be ubiquinone. This is NADH-ubiquinone oxidoreductase chain 2 (ND2) from Debaryomyces hansenii (strain ATCC 36239 / CBS 767 / BCRC 21394 / JCM 1990 / NBRC 0083 / IGC 2968) (Yeast).